The following is a 62-amino-acid chain: uncharacterized protein (62 aa).

The chain crosses the membrane as a helical span at residues 15–37 (FSSGVLISNFLLFNFIIISHSSL). Positions 41–56 (TTTTTTTTTTTTNTKS) are enriched in low complexity. The segment at 41-62 (TTTTTTTTTTTTNTKSTLHRSG) is disordered.

The protein resides in the membrane. This is an uncharacterized protein from Dictyostelium discoideum (Social amoeba).